Consider the following 211-residue polypeptide: Probable nicotinate-nucleotide adenylyltransferase (211 aa).

The protein belongs to the NadD family.

The catalysed reaction is nicotinate beta-D-ribonucleotide + ATP + H(+) = deamido-NAD(+) + diphosphate. It functions in the pathway cofactor biosynthesis; NAD(+) biosynthesis; deamido-NAD(+) from nicotinate D-ribonucleotide: step 1/1. Functionally, catalyzes the reversible adenylation of nicotinate mononucleotide (NaMN) to nicotinic acid adenine dinucleotide (NaAD). This Desulfotalea psychrophila (strain LSv54 / DSM 12343) protein is Probable nicotinate-nucleotide adenylyltransferase.